A 168-amino-acid polypeptide reads, in one-letter code: Large ribosomal subunit protein bL17 (168 aa).

Positions 124–168 (QATGEAEAATKRAAKDAEGSAEVSEAKVDTTKADDEAAAEESKDA) are disordered. Residues 131 to 168 (AATKRAAKDAEGSAEVSEAKVDTTKADDEAAAEESKDA) show a composition bias toward basic and acidic residues.

This sequence belongs to the bacterial ribosomal protein bL17 family. In terms of assembly, part of the 50S ribosomal subunit. Contacts protein L32.

This chain is Large ribosomal subunit protein bL17, found in Streptomyces coelicolor (strain ATCC BAA-471 / A3(2) / M145).